A 215-amino-acid polypeptide reads, in one-letter code: Transcription factor LAX PANICLE 1 (215 aa).

The disordered stretch occupies residues 1-48; the sequence is MHDPRGFPIHPQPYHLHPTAGGLGEGRMRGGGRRRPGAKLSTDPQSVA. Residues 40–53 are basic motif; degenerate; sequence LSTDPQSVAARERR. Residues 40–89 enclose the bHLH domain; that stretch reads LSTDPQSVAARERRHRISDRFRVLRSLVPGGSKMDTVSMLEQAIHYVKFL. The interval 54–89 is helix-loop-helix motif; that stretch reads HRISDRFRVLRSLVPGGSKMDTVSMLEQAIHYVKFL.

This sequence belongs to the bHLH protein family. In terms of assembly, efficient DNA binding requires dimerization with another bHLH protein. Interacts with LAX2. Expressed in the boundary between the shoot apical meristem (SAM) and the region of new meristem formation.

Its subcellular location is the nucleus. In terms of biological role, transcription factor that seems to regulate organogenesis in postembryonic development. Involved in the regulation of shoot branching by controlling axillary meristem initiation. Functions in association with LAX2 to regulate the process of AM formation. Possesses transactivation activity in yeast. The chain is Transcription factor LAX PANICLE 1 from Oryza sativa subsp. japonica (Rice).